A 411-amino-acid chain; its full sequence is MRFIEEFINKGYFHQCTDLDRLTAITKETKIAAYIGFDCTATSLHIGSLMQIMILRLLQQHGHKPIVIIGGGTSKIGDPTWKDEVRKILSKEDIAKNAEGIKKSLSKFIKFGDGKSDAIMLDNAEWLDSFNYLDFLRDFGSYFSVNRMLTMDSVKLRLEREQHLSFLEFNYMLLQAYDFYYLSKHYNCSLQLGGSDQWGNIVMGADLIRKISGKEVFGMTTPLLTTSSGAKMGKTAAGAVWLNEDLLSPYDYYQYWRNCEDADIVRFAKLYSEFTQEELNRFESLAAEDINAAKKQLAYELTKLCHSEQAAKSALETAVKIFEEGQIDENLPTVVLEQEVLQAGISAYELFYEAGLATSKSEARKLIRGNGAKINDRLVADENMIINTNFLLDKKVIKLSAGKKRHILVRV.

Tyrosine 34 provides a ligand contact to L-tyrosine. Residues 39 to 48 (CTATSLHIGS) carry the 'HIGH' region motif. The L-tyrosine site is built by tyrosine 171 and glutamine 175. A 'KMSKS' region motif is present at residues 231–235 (KMGKT). Position 234 (lysine 234) interacts with ATP. The region spanning 345–411 (ISAYELFYEA…GKKRHILVRV (67 aa)) is the S4 RNA-binding domain.

Belongs to the class-I aminoacyl-tRNA synthetase family. TyrS type 1 subfamily. In terms of assembly, homodimer.

The protein localises to the cytoplasm. It carries out the reaction tRNA(Tyr) + L-tyrosine + ATP = L-tyrosyl-tRNA(Tyr) + AMP + diphosphate + H(+). Functionally, catalyzes the attachment of tyrosine to tRNA(Tyr) in a two-step reaction: tyrosine is first activated by ATP to form Tyr-AMP and then transferred to the acceptor end of tRNA(Tyr). The sequence is that of Tyrosine--tRNA ligase from Rickettsia rickettsii (strain Sheila Smith).